Here is a 323-residue protein sequence, read N- to C-terminus: Sphingolipid delta(4)-desaturase DES1 (323 aa).

A lipid anchor (N-myristoyl glycine) is attached at G2. Transmembrane regions (helical) follow at residues 41–61 and 68–88; these read PNLI…FYIV and WVIF…TLGI. The Histidine box-1 signature appears at 89 to 93; it reads HEIAH. A helical transmembrane segment spans residues 107 to 127; the sequence is WFGMFANLPIGIPYSVSFKSY. The Histidine box-2 signature appears at 128–132; that stretch reads HMDHH. 3 consecutive transmembrane segments (helical) span residues 152-172, 184-204, and 209-229; these read FFCT…FYAF, YLEV…YYFL, and LVYM…SGHF. The Histidine box-3 signature appears at 259–263; the sequence is HNEHH. Phosphoserine is present on S307.

Belongs to the fatty acid desaturase type 1 family. DEGS subfamily. As to quaternary structure, interacts with RLBP1; the interaction increases synthesis of chromophore-precursors by DEGS1. Myristoylation can target the enzyme to the mitochondria leading to an increase in ceramide levels.

The protein resides in the mitochondrion membrane. It is found in the endoplasmic reticulum membrane. The enzyme catalyses an N-acylsphinganine + 2 Fe(II)-[cytochrome b5] + O2 + 2 H(+) = an N-acylsphing-4-enine + 2 Fe(III)-[cytochrome b5] + 2 H2O. It carries out the reaction all-trans-retinol = 11-cis-retinol. It catalyses the reaction all-trans-retinol = 9-cis-retinol. The catalysed reaction is all-trans-retinol = 13-cis-retinol. The enzyme catalyses 11-cis-retinol = 13-cis-retinol. It carries out the reaction 11-cis-retinol = 9-cis-retinol. In terms of biological role, has sphingolipid-delta-4-desaturase activity. Converts D-erythro-sphinganine to D-erythro-sphingosine (E-sphing-4-enine). Catalyzes the equilibrium isomerization of retinols. The polypeptide is Sphingolipid delta(4)-desaturase DES1 (DEGS1) (Pongo abelii (Sumatran orangutan)).